We begin with the raw amino-acid sequence, 86 residues long: High affinity immunoglobulin epsilon receptor subunit gamma (86 aa).

Positions 1–18 are cleaved as a signal peptide; sequence MISAVILFLLLLVEQAAA. The Extracellular segment spans residues 19 to 23; the sequence is LGEPQ. The helical transmembrane segment at 24–44 threads the bilayer; the sequence is LCYILDAVLFLYGIVLTLLYC. The Cytoplasmic portion of the chain corresponds to 45 to 86; sequence RLKIQVRKAAIASREKADAVYTGLNTRSQETYETLKHEKPPQ. Residues 54 to 82 enclose the ITAM domain; that stretch reads AIASREKADAVYTGLNTRSQETYETLKHE. Tyrosine 65 and tyrosine 76 each carry phosphotyrosine. Threonine 78 carries the phosphothreonine modification.

The protein belongs to the CD3Z/FCER1G family. As to quaternary structure, igE Fc receptor is a tetramer of an alpha chain, a beta chain, and two disulfide linked gamma chains. Associates with FCGR1A; forms a functional signaling complex. The signaling subunit of immunoglobulin gamma (IgG) Fc receptor complex. As a homodimer or a heterodimer of CD247 and FCER1G, associates with the ligand binding subunit FCGR3A to form a functional receptor complex. Associates with CLEC6A. Interacts with CLEC4E. Interacts (via ITAM domain) with SYK (via SH2 domains); activates SYK, enabling integrin-mediated activation of neutrophils and macrophages. Interacts with CSF2RB and recruits SYK in response to IL3 stimulation; this interaction is direct. Interacts with CD300LH; the interaction may be indirect. Interacts with CD300LD. Interacts with TARM1. As to expression, expressed in mast cells (at protein level). Expressed in basophils (at protein level).

The protein resides in the cell membrane. Adapter protein containing an immunoreceptor tyrosine-based activation motif (ITAM) that transduces activation signals from various immunoreceptors. As a component of the high-affinity immunoglobulin E (IgE) receptor, mediates allergic inflammatory signaling in mast cells. As a constitutive component of interleukin-3 receptor complex, selectively mediates interleukin 4/IL4 production by basophils, priming T-cells toward effector T-helper 2 subset. Associates with pattern recognition receptors CLEC4D and CLEC4E to form a functional signaling complex in myeloid cells. Binding of mycobacterial trehalose 6,6'-dimycolate (TDM) to this receptor complex leads to phosphorylation of ITAM, triggering activation of SYK, CARD9 and NF-kappa-B, consequently driving maturation of antigen-presenting cells and shaping antigen-specific priming of T-cells toward effector T-helper 1 and T-helper 17 cell subtypes. May function cooperatively with other activating receptors. Functionally linked to integrin beta-2/ITGB2-mediated neutrophil activation. Also involved in integrin alpha-2/ITGA2-mediated platelet activation. The protein is High affinity immunoglobulin epsilon receptor subunit gamma of Mus musculus (Mouse).